The chain runs to 105 residues: MTTVSSDRIRIKLKAYDYRILDKAVAEIVDTARNTGASIAGPIPLPTNIHKFTVNRSVHVDKKSREQFEMRIHKRLMDILEPTQQTVDALGKLSLPAGVDVEIKL.

Belongs to the universal ribosomal protein uS10 family. As to quaternary structure, part of the 30S ribosomal subunit.

In terms of biological role, involved in the binding of tRNA to the ribosomes. The chain is Small ribosomal subunit protein uS10 from Lawsonia intracellularis (strain PHE/MN1-00).